Here is a 207-residue protein sequence, read N- to C-terminus: Putative acetyltransferase C18B11.09c (207 aa).

This sequence belongs to the transferase hexapeptide repeat family.

In Schizosaccharomyces pombe (strain 972 / ATCC 24843) (Fission yeast), this protein is Putative acetyltransferase C18B11.09c.